The chain runs to 248 residues: Mannose-binding protein C (248 aa).

Residues 1-20 (MSLFPSLPLLLLSMVAASYS) form the signal peptide. The Collagen-like domain maps to 42–99 (GINGFPGKDGRDGTKGEKGEPGQGLRGLQGPPGKLGPPGNPGPSGSPGAKGQKGDPGA). The interval 43–112 (INGFPGKDGR…CDSSLANPER (70 aa)) is disordered. At proline 47 the chain carries 4-hydroxyproline. Positions 49–61 (KDGRDGTKGEKGE) are enriched in basic and acidic residues. 4 positions are modified to 4-hydroxyproline: proline 73, proline 79, proline 82, and proline 88. Residues 112–130 (RKTLQTEINRIKKWVTFSL) adopt a coiled-coil conformation. The C-type lectin domain maps to 134–245 (VGKKLFLTNG…CSSSHLVICE (112 aa)). Intrachain disulfides connect cysteine 155–cysteine 244 and cysteine 222–cysteine 236.

Oligomeric complex of 3 or more homotrimers. Interacts with MASP1 and MASP2. Interacts with MEP1A and MEP1B and may inhibit their catalytic activity. Post-translationally, hydroxylation on proline residues within the sequence motif, GXPG, is most likely to be 4-hydroxy as this fits the requirement for 4-hydroxylation in vertebrates.

It is found in the secreted. Its function is as follows. Calcium-dependent lectin involved in innate immune defense. Binds mannose, fucose and N-acetylglucosamine on different microorganisms and activates the lectin complement pathway. Binds to late apoptotic cells, as well as to apoptotic blebs and to necrotic cells, but not to early apoptotic cells, facilitating their uptake by macrophages. In Callithrix jacchus (White-tufted-ear marmoset), this protein is Mannose-binding protein C (MBL2).